A 103-amino-acid polypeptide reads, in one-letter code: Matrix Gla protein (103 aa).

A signal peptide spans 1 to 19 (MKSLILLAILAALAVVTLC). Position 21 is a 4-carboxyglutamate (Glu-21). 3 positions are modified to phosphoserine: Ser-22, Ser-25, and Ser-28. The Gla domain maps to 51 to 97 (RAKVQERIRERSKPVHELNREACDDYRLCERYAMVYGYNAAYNRYFR). A 4-carboxyglutamate mark is found at Glu-56, Glu-60, Glu-67, and Glu-71. A disulfide bridge links Cys-73 with Cys-79. The propeptide at 97–103 (RKRRGTK) is removed in mature form; probably by carboxypeptidase N.

It belongs to the osteocalcin/matrix Gla protein family. In terms of processing, requires vitamin K-dependent gamma-carboxylation for its function.

Its subcellular location is the secreted. In terms of biological role, associates with the organic matrix of bone and cartilage. Thought to act as an inhibitor of bone formation. This is Matrix Gla protein (MGP) from Homo sapiens (Human).